We begin with the raw amino-acid sequence, 1579 residues long: Eukaryotic translation initiation factor 4 gamma 3 (1579 aa).

Disordered regions lie at residues 1 to 35 and 128 to 326; these read MNSQ…RPGV and TQQQ…GPSL. Over residues 10 to 25 the composition is skewed to low complexity; sequence PFFQRPQIQPPRAAIP. A compositionally biased stretch (polar residues) spans 26–35; the sequence is NSSPSIRPGV. Positions 134 to 162 are PABPC1-binding; sequence PAKREKKTIRIRDPNQGGKDITEEIMSGG. Over residues 167-183 the composition is skewed to pro residues; the sequence is PTPPIGRPASTPTPPQQ. Residue Thr-168 is modified to Phosphothreonine. Phosphoserine occurs at positions 230, 232, and 267. The segment covering 266 to 292 has biased composition (low complexity); the sequence is SSPTSLPPLARSSLPSPMSAALSSQPL. The span at 295–308 shows a compositional bias: basic and acidic residues; it reads AEDKCELPSSKEED. Over residues 315–326 the composition is skewed to polar residues; it reads PTSCTAASGPSL. Ser-436, Ser-470, Ser-472, and Ser-490 each carry phosphoserine. Residues 454–470 are compositionally biased toward basic and acidic residues; that stretch reads RTCLSKDAKEMQDKAES. Disordered regions lie at residues 454–615, 681–706, and 724–744; these read RTCL…DTEG, RQTP…QRRE, and AENA…PESI. The span at 471–480 shows a compositional bias: acidic residues; that stretch reads ESDGQAEETA. Residues 481–501 show a composition bias toward polar residues; the sequence is DPQSLHSGRSPAPVQTATTAP. Composition is skewed to basic and acidic residues over residues 506 to 515 and 549 to 563; these read KTKEQTRTPD and SERD…KAEE. Residues 589–598 show a composition bias toward low complexity; sequence SGSADSSADG. Residues 606 to 615 show a composition bias toward basic and acidic residues; sequence ESWKPADTEG. An EIF4E-binding region spans residues 614-625; sequence EGKKQYDREFLL. The interval 694 to 1014 is eIF3/EIF4A-binding; it reads VGPRRSQPGQ…EQRKVQQLMT (321 aa). HEAT repeat units follow at residues 740-778, 779-826, 827-900, 901-939, and 940-979; these read DPES…LTVD, TEER…GNTV, NFRK…LKML, TEAI…DFEK, and AKPR…LCNW. Positions 750-978 constitute an MIF4G domain; the sequence is FRKVRSILNK…QDVIDLRLCN (229 aa). Residues 855 to 871 show a composition bias toward basic and acidic residues; the sequence is KELEAASAPEERTRLHD. Residues 855–875 form a disordered region; that stretch reads KELEAASAPEERTRLHDELEE. Residues 989–1018 are a coiled coil; the sequence is KTIEQIHKEAKIEEQEEQRKVQQLMTKEKR. Disordered stretches follow at residues 1009–1037 and 1067–1214; these read VQQL…QGAK and LGSW…LSEE. The span at 1086-1098 shows a compositional bias: low complexity; sequence LRSSASSLNRFSP. Ser-1150 bears the Phosphoserine; by CaMK1 mark. Basic and acidic residues-rich tracts occupy residues 1150–1169 and 1179–1197; these read SSKD…EMLE and DAER…ELAK. Residues 1154–1176 are a coiled coil; sequence LLDNQSQEEQRREMLETVKQLTG. Ser-1212 carries the post-translational modification Phosphoserine. The 123-residue stretch at 1215–1337 folds into the MI domain; that stretch reads EVERKSKSII…SMRELIVEFS (123 aa). Positions 1406–1438 form a coiled coil; that stretch reads SSEALSKKELSAEELSQRLEKLIMEEKADDERI. Positions 1410-1579 constitute a W2 domain; it reads LSKKELSAEE…REAEEESEDN (170 aa). The tract at residues 1427-1579 is EIF4A-binding; the sequence is LIMEEKADDE…REAEEESEDN (153 aa). The segment at 1565 to 1579 is necessary but not sufficient for MKNK1-binding; sequence FFTWLREAEEESEDN.

It belongs to the eukaryotic initiation factor 4G family. Interacts with EIF4A, EIF4E, eIF3 and PABPC1. Part of a complex with EIF4E. eIF4F is a multi-subunit complex, the composition of which varies with external and internal environmental conditions. It is composed of at least EIF4A, EIF4E and EIF4G1/EIF4G3. EIF4G1/EIF4G3 interacts through its C-terminus with the serine/threonine kinases MKNK1, and with MKNK2. Appears to act as a scaffold protein, holding these enzymes in place to phosphorylate eIF4E. Non-phosphorylated EIF4EBP1 competes with EIF4G1/EIFG3 to interact with EIF4E; insulin stimulated MAP-kinase (MAPK1 and MAPK3) phosphorylation of EIF4EBP1 causes dissociation of the complex allowing EIF4G1/EIF4G3 to bind and consequent initiation of translation. EIF4G1/EIF4G3 interacts with PABPC1 to bring about circularization of the mRNA. Interacts with FXR1; promoting translation of FXR1 target mRNAs.

In terms of biological role, component of the protein complex eIF4F, which is involved in the recognition of the mRNA cap, ATP-dependent unwinding of 5'-terminal secondary structure and recruitment of mRNA to the ribosome. Functional homolog of EIF4G1. This chain is Eukaryotic translation initiation factor 4 gamma 3 (Eif4g3), found in Mus musculus (Mouse).